A 231-amino-acid chain; its full sequence is Large ribosomal subunit protein uL1 (231 aa).

The protein belongs to the universal ribosomal protein uL1 family. Part of the 50S ribosomal subunit.

Its function is as follows. Binds directly to 23S rRNA. The L1 stalk is quite mobile in the ribosome, and is involved in E site tRNA release. Functionally, protein L1 is also a translational repressor protein, it controls the translation of the L11 operon by binding to its mRNA. The polypeptide is Large ribosomal subunit protein uL1 (Buchnera aphidicola subsp. Acyrthosiphon pisum (strain 5A)).